A 517-amino-acid chain; its full sequence is MIEVLIGLGAGVVGVGAGYLYAKKINDANYNIFLEQAKAKAKAIEYEAELTLKNSKISVQEAEFEAKKRYDDKTTKLQKEYASKFDELTKKEKILLNEQELLNESKELFEKDKQDAKVTYEEGLNLKATYQNKVEEAIRVLEHAAGLTEEEAKEVVLKKVEEKSRADIAHIVRKYEEEAKREAKKRVNYILAQATSRFAGEFAAERLINVVNIKNDELKGRIIGKEGRNIKTLEMVLGVDIIIDDTPHAIILSSFNLYRRAIATRVIELLVEDGRIQPARIEDLHKKVTEEFEQSIQEEGENIVMDLGLNKIHPEIVKLIGKLKFRASYGQNALAHSLEVAHLAGIIAAECGGDEKLAKRAGILHDIGKALTHEYEGSHVDLGAEICKRYKEHPVVINAIYAHHGHEEATSIESAAVCAADALSAARPGARREVLESFLKRVEEIENIAKSKEGIKQAYAINAGREIRVIANAKLINDDEAVLVAKEIAQEIESKVQYPGEIKVSVIRETRAVDFAK.

The helical transmembrane segment at 1–21 (MIEVLIGLGAGVVGVGAGYLY) threads the bilayer. A KH domain is found at 207 to 273 (LINVVNIKND…TRVIELLVED (67 aa)). Residues 333–426 (ALAHSLEVAH…VCAADALSAA (94 aa)) enclose the HD domain.

The protein belongs to the RNase Y family.

Its subcellular location is the cell membrane. In terms of biological role, endoribonuclease that initiates mRNA decay. The polypeptide is Ribonuclease Y (Campylobacter concisus (strain 13826)).